We begin with the raw amino-acid sequence, 147 residues long: Large ribosomal subunit protein uL13 (147 aa).

Belongs to the universal ribosomal protein uL13 family. As to quaternary structure, part of the 50S ribosomal subunit.

Its function is as follows. This protein is one of the early assembly proteins of the 50S ribosomal subunit, although it is not seen to bind rRNA by itself. It is important during the early stages of 50S assembly. The chain is Large ribosomal subunit protein uL13 from Mycolicibacterium gilvum (strain PYR-GCK) (Mycobacterium gilvum (strain PYR-GCK)).